We begin with the raw amino-acid sequence, 233 residues long: Large ribosomal subunit protein uL1 (233 aa).

It belongs to the universal ribosomal protein uL1 family. In terms of assembly, part of the 50S ribosomal subunit.

Binds directly to 23S rRNA. The L1 stalk is quite mobile in the ribosome, and is involved in E site tRNA release. Functionally, protein L1 is also a translational repressor protein, it controls the translation of the L11 operon by binding to its mRNA. This Geobacillus stearothermophilus (Bacillus stearothermophilus) protein is Large ribosomal subunit protein uL1.